Reading from the N-terminus, the 793-residue chain is Probable serine/threonine-protein kinase fnkA (793 aa).

One can recognise a Protein kinase domain in the interval 11 to 358 (WEILSQLGTG…IINLISHNFI (348 aa)). Residues 17 to 25 (LGTGAFGRV) and Lys46 contribute to the ATP site. Asp138 functions as the Proton acceptor in the catalytic mechanism. FNIP repeat units follow at residues 403–444 (FNQT…FGAR), 470–514 (YNQP…ILGD), 515–557 (YDQK…LGYR), 558–601 (FNKA…LGYC), and 691–733 (FIRP…LGSR).

It belongs to the protein kinase superfamily. STE Ser/Thr protein kinase family. Mg(2+) is required as a cofactor.

It carries out the reaction L-seryl-[protein] + ATP = O-phospho-L-seryl-[protein] + ADP + H(+). The catalysed reaction is L-threonyl-[protein] + ATP = O-phospho-L-threonyl-[protein] + ADP + H(+). In Dictyostelium discoideum (Social amoeba), this protein is Probable serine/threonine-protein kinase fnkA.